We begin with the raw amino-acid sequence, 131 residues long: Small ribosomal subunit protein uS8 (131 aa).

Belongs to the universal ribosomal protein uS8 family. Part of the 30S ribosomal subunit. Contacts proteins S5 and S12.

Functionally, one of the primary rRNA binding proteins, it binds directly to 16S rRNA central domain where it helps coordinate assembly of the platform of the 30S subunit. In Pelodictyon phaeoclathratiforme (strain DSM 5477 / BU-1), this protein is Small ribosomal subunit protein uS8.